We begin with the raw amino-acid sequence, 306 residues long: Glutathione transport system permease protein GsiC (306 aa).

At 1–8 the chain is on the cytoplasmic side; the sequence is MLNYVIKR. Residues 9-29 form a helical membrane-spanning segment; the sequence is LLGLIPTLFIVSVLVFLFVHM. The Periplasmic segment spans residues 30–102; that stretch reads LPGDPARLIA…SRFMPTLWLT (73 aa). One can recognise an ABC transmembrane type-1 domain in the interval 95–292; it reads FMPTLWLTIT…LEFILINLVV (198 aa). The helical transmembrane segment at 103 to 123 threads the bilayer; it reads ITSMVWAVIFGMAAGIIAAVW. The Cytoplasmic segment spans residues 124–134; the sequence is RNRWPDRLSMT. The helical transmembrane segment at 135–155 threads the bilayer; the sequence is IAVSGISFPAFALGMLLIQVF. Over 156–168 the chain is Periplasmic; it reads SVELGWLPTVGAD. The chain crosses the membrane as a helical span at residues 169–189; the sequence is SWQHYILPSLTLGAAVAAVMA. Residues 190 to 228 lie on the Cytoplasmic side of the membrane; that stretch reads RFTRASFVDVLSEDYMRTARAKGVSETWVVLKHGLRNAM. Residues 229–249 traverse the membrane as a helical segment; sequence IPVVTMMGLQFGFLLGGSIVV. Residues 250 to 277 are Periplasmic-facing; sequence EKVFNWPGLGRLLVDSVEMRDYPVIQAE. A helical transmembrane segment spans residues 278 to 298; sequence ILLFSLEFILINLVVDVLYAA. The Cytoplasmic portion of the chain corresponds to 299 to 306; that stretch reads INPAIRYK.

It belongs to the binding-protein-dependent transport system permease family. The complex is composed of two ATP-binding proteins (GsiA), two transmembrane proteins (GsiC and GsiD) and a solute-binding protein (GsiB).

The protein resides in the cell inner membrane. Part of the ABC transporter complex GsiABCD involved in glutathione import. Probably responsible for the translocation of the substrate across the membrane. The polypeptide is Glutathione transport system permease protein GsiC (Escherichia coli O1:K1 / APEC).